A 198-amino-acid chain; its full sequence is Peptide methionine sulfoxide reductase MsrA 2 (198 aa).

Residue C32 is part of the active site.

The protein belongs to the MsrA Met sulfoxide reductase family.

It catalyses the reaction L-methionyl-[protein] + [thioredoxin]-disulfide + H2O = L-methionyl-(S)-S-oxide-[protein] + [thioredoxin]-dithiol. It carries out the reaction [thioredoxin]-disulfide + L-methionine + H2O = L-methionine (S)-S-oxide + [thioredoxin]-dithiol. In terms of biological role, has an important function as a repair enzyme for proteins that have been inactivated by oxidation. Catalyzes the reversible oxidation-reduction of methionine sulfoxide in proteins to methionine. The chain is Peptide methionine sulfoxide reductase MsrA 2 (msrA2) from Rhizobium meliloti (strain 1021) (Ensifer meliloti).